We begin with the raw amino-acid sequence, 54 residues long: Potassium channel toxin alpha-KTx 14.x (54 aa).

Residues methionine 1–glycine 23 form the signal peptide. Intrachain disulfides connect cysteine 30–cysteine 46, cysteine 36–cysteine 51, and cysteine 40–cysteine 53.

It belongs to the short scorpion toxin superfamily. Potassium channel inhibitor family. Alpha-KTx 14 subfamily. Expressed by the venom gland.

The protein localises to the secreted. Functionally, potassium channels inhibitor. In Olivierus martensii (Manchurian scorpion), this protein is Potassium channel toxin alpha-KTx 14.x.